The chain runs to 270 residues: Cross-pathway control protein 1 (270 aa).

Disordered stretches follow at residues 114–135 and 153–213; these read QAQAQVQTQPQTQTQTEQQTQP and QTVH…IIVE. Residues 184 to 195 are compositionally biased toward low complexity; sequence SVSPPSGRHSSV. Residues 216–270 form the bZIP domain; it reads SDVVAMKRARNTLAARKSRERKAQRLEELEAKIEELIAERDRWKNLALAHGASTE. The basic motif stretch occupies residues 222 to 240; the sequence is KRARNTLAARKSRERKAQR. A leucine-zipper region spans residues 241 to 248; that stretch reads LEELEAKI.

This sequence belongs to the bZIP family. GCN4 subfamily. As to quaternary structure, binds DNA as a dimer.

It localises to the nucleus. In N.crassa grown under amino acid starvation conditions, this protein is required for increasing the transcription of the genes coding for many amino acid biosynthetic pathways enzymes. This transcription factor binds and recognize the DNA sequence: 5'-TGACTC-3'. This Neurospora crassa (strain ATCC 24698 / 74-OR23-1A / CBS 708.71 / DSM 1257 / FGSC 987) protein is Cross-pathway control protein 1 (cpc-1).